The primary structure comprises 465 residues: Cysteine--tRNA ligase (465 aa).

Zn(2+) is bound at residue cysteine 27. The 'HIGH' region motif lies at 29 to 39 (PTVYDFIHIGN). The Zn(2+) site is built by cysteine 207, histidine 232, and glutamate 236. The 'KMSKS' region motif lies at 264–268 (KMSKS). Residue lysine 267 participates in ATP binding.

This sequence belongs to the class-I aminoacyl-tRNA synthetase family. In terms of assembly, monomer. The cofactor is Zn(2+).

Its subcellular location is the cytoplasm. It catalyses the reaction tRNA(Cys) + L-cysteine + ATP = L-cysteinyl-tRNA(Cys) + AMP + diphosphate. The sequence is that of Cysteine--tRNA ligase from Caldicellulosiruptor saccharolyticus (strain ATCC 43494 / DSM 8903 / Tp8T 6331).